A 188-amino-acid chain; its full sequence is MATYTTSDFKPGLKFMQDGEPCVIVENEFVKPGKGQAFTRTRIRKLISGKVLDVNFKSGTSVEAADVMDLNLTYSYKDDAFWYFMHPETFEQYSADAKAVGDAEKWLLDQADCIVTLWNGAPITVTPPNFVELEIVDTDPGLKGDTAGTGGKPATLSTGAVVKVPLFVQIGEVIRVDTRSGEYVSRVK.

The residue at position 34 (Lys-34) is an N6-(3,6-diaminohexanoyl)-5-hydroxylysine.

It belongs to the elongation factor P family. In terms of processing, may be beta-lysylated on the epsilon-amino group of Lys-34 by the combined action of EpmA and EpmB, and then hydroxylated on the C5 position of the same residue by EpmC (if this protein is present). Lysylation is critical for the stimulatory effect of EF-P on peptide-bond formation. The lysylation moiety may extend toward the peptidyltransferase center and stabilize the terminal 3-CCA end of the tRNA. Hydroxylation of the C5 position on Lys-34 may allow additional potential stabilizing hydrogen-bond interactions with the P-tRNA.

It localises to the cytoplasm. Its pathway is protein biosynthesis; polypeptide chain elongation. Involved in peptide bond synthesis. Alleviates ribosome stalling that occurs when 3 or more consecutive Pro residues or the sequence PPG is present in a protein, possibly by augmenting the peptidyl transferase activity of the ribosome. Modification of Lys-34 is required for alleviation. The chain is Elongation factor P from Haemophilus influenzae (strain 86-028NP).